Here is a 233-residue protein sequence, read N- to C-terminus: Biosynthetic peptidoglycan transglycosylase (233 aa).

A helical transmembrane segment spans residues 4 to 24 (LAYLAGCLIVGVVAMQVYFFL).

It belongs to the glycosyltransferase 51 family.

It localises to the cell inner membrane. The catalysed reaction is [GlcNAc-(1-&gt;4)-Mur2Ac(oyl-L-Ala-gamma-D-Glu-L-Lys-D-Ala-D-Ala)](n)-di-trans,octa-cis-undecaprenyl diphosphate + beta-D-GlcNAc-(1-&gt;4)-Mur2Ac(oyl-L-Ala-gamma-D-Glu-L-Lys-D-Ala-D-Ala)-di-trans,octa-cis-undecaprenyl diphosphate = [GlcNAc-(1-&gt;4)-Mur2Ac(oyl-L-Ala-gamma-D-Glu-L-Lys-D-Ala-D-Ala)](n+1)-di-trans,octa-cis-undecaprenyl diphosphate + di-trans,octa-cis-undecaprenyl diphosphate + H(+). The protein operates within cell wall biogenesis; peptidoglycan biosynthesis. In terms of biological role, peptidoglycan polymerase that catalyzes glycan chain elongation from lipid-linked precursors. The protein is Biosynthetic peptidoglycan transglycosylase of Cupriavidus metallidurans (strain ATCC 43123 / DSM 2839 / NBRC 102507 / CH34) (Ralstonia metallidurans).